A 186-amino-acid chain; its full sequence is NADH dehydrogenase [ubiquinone] 1 beta subcomplex subunit 8, mitochondrial (186 aa).

Residues 1 to 28 (MAVARAGVLGVQWLQRASWNVMPLGART) constitute a mitochondrion transit peptide. Residues 133–153 (LFGFLAFMIFMCWVGEVYPVY) form a helical membrane-spanning segment.

This sequence belongs to the complex I NDUFB8 subunit family. In terms of assembly, complex I is composed of 45 different subunits.

Its subcellular location is the mitochondrion inner membrane. Its function is as follows. Accessory subunit of the mitochondrial membrane respiratory chain NADH dehydrogenase (Complex I), that is believed not to be involved in catalysis. Complex I functions in the transfer of electrons from NADH to the respiratory chain. The immediate electron acceptor for the enzyme is believed to be ubiquinone. This chain is NADH dehydrogenase [ubiquinone] 1 beta subcomplex subunit 8, mitochondrial (NDUFB8), found in Pongo abelii (Sumatran orangutan).